The chain runs to 195 residues: dCTP deaminase (195 aa).

Residues 105–110, aspartate 123, 131–133, glutamine 152, tyrosine 166, lysine 173, and glutamine 177 each bind dCTP; these read RSSLGR and TLE. Glutamate 133 (proton donor/acceptor) is an active-site residue. Residues 159–195 are disordered; it reads KSPAERPYGAERGSKYQGQTGPQASRIQGDREFGGDQ. Residues 160–172 are compositionally biased toward basic and acidic residues; sequence SPAERPYGAERGS. Residues 174–184 are compositionally biased toward polar residues; that stretch reads YQGQTGPQASR. Over residues 186-195 the composition is skewed to basic and acidic residues; the sequence is QGDREFGGDQ.

This sequence belongs to the dCTP deaminase family. As to quaternary structure, homotrimer.

The enzyme catalyses dCTP + H2O + H(+) = dUTP + NH4(+). The protein operates within pyrimidine metabolism; dUMP biosynthesis; dUMP from dCTP (dUTP route): step 1/2. Functionally, catalyzes the deamination of dCTP to dUTP. In Natronomonas pharaonis (strain ATCC 35678 / DSM 2160 / CIP 103997 / JCM 8858 / NBRC 14720 / NCIMB 2260 / Gabara) (Halobacterium pharaonis), this protein is dCTP deaminase.